Reading from the N-terminus, the 328-residue chain is 2-oxoglutarate-dependent dioxygenase gloF (328 aa).

Residues 175–289 form the Fe2OG dioxygenase domain; sequence DTSELRMNHY…RYSVAYFGKP (115 aa). Fe cation-binding residues include histidine 201, aspartate 203, and histidine 261. 2-oxoglutarate is bound at residue arginine 280.

Belongs to the iron/ascorbate-dependent oxidoreductase family. Fe(2+) is required as a cofactor.

Its pathway is mycotoxin biosynthesis. In terms of biological role, 2-oxoglutarate-dependent dioxygenase; part of the gene cluster that mediates the biosynthesis of pneumocandins, lipohexapeptides of the echinocandin family that prevent fungal cell wall formation by non-competitive inhibition of beta-1,3-glucan synthase. The 10,12-dimethylmyristoyl side chain is synthesized by the reducing polyketide synthase gloL/GLPKS4. The thioesterase gloN/GLHYD exclusively interacts with gloL/GLPKS4 to maintain turnover of the polyketide side chain. The 10R,12S-dimethylmyristic acid is then transferred to the first thiolation domain of the nonribosomal peptide synthetase gloA/GLNRPS4 by the acyl-AMP ligase gloD/GLligase, followed by its acylation to L-ornithine to trigger elongation of the cyclic hexapeptide. L-ornithine, 4R-hydroxyl-L-proline (generated from L-proline by the dioxygenase gloF/GLOXY2), 3S-hydroxyl-L-homotyrosine (generated by gloG/GLHtyB, gloH/GLHtyA, gloI/GLHtyC, gloJ/GLHtyD and hydroxylated at C-3 by the dioxygenase gloM/GLOXY1), 3R-hydroxyl-L-glutamine (generated from L-glutamine probably by the dioxygenase gloE/GLOXY3) and 3S-hydroxyl-L-proline (generated from L-proline by the dioxygenase gloF/GLOXY2 to yield pneumocandin B0), or 3S-hydroxyl-4S-methyl-L-proline (generated from L-leucine by the dioxygenase gloC/GLOXY4 to yield pneumocandin A0) are sequentially added to the growing chain. The last C domain of gloA/GLNRPS4 is proposed to be responsible for cyclization by condensation to form the peptide bond between L-ornithine and 3S-hydroxyl-4S-methyl-L-proline (for pneumocandin A0) or 3S-hydroxyl-L-proline (for pneumocandin B0). Finally, the subsequent C-4 hydroxylation of 3S-hydroxyl-L-homotyrosine and L-ornithine dihydroxylation at C-4 and C-5 are performed by the cytochrome P450 monooxygenases gloP/GLP450-1 and gloO/GLP450-2, respectively. The chain is 2-oxoglutarate-dependent dioxygenase gloF from Glarea lozoyensis (strain ATCC 20868 / MF5171).